We begin with the raw amino-acid sequence, 451 residues long: Phosphoglucosamine mutase (451 aa).

The active-site Phosphoserine intermediate is the serine 102. Serine 102, aspartate 244, aspartate 246, and aspartate 248 together coordinate Mg(2+). A Phosphoserine modification is found at serine 102.

Belongs to the phosphohexose mutase family. Mg(2+) is required as a cofactor. Activated by phosphorylation.

The enzyme catalyses alpha-D-glucosamine 1-phosphate = D-glucosamine 6-phosphate. Its function is as follows. Catalyzes the conversion of glucosamine-6-phosphate to glucosamine-1-phosphate. The protein is Phosphoglucosamine mutase of Lawsonia intracellularis (strain PHE/MN1-00).